The primary structure comprises 301 residues: Phosphatidylglycerol--prolipoprotein diacylglyceryl transferase (301 aa).

The next 4 membrane-spanning stretches (helical) occupy residues 10–30 (IAFSLGPVKVHWYGLMYLAGF), 57–77 (LLFYAMMGVVLGGRVGYMLFY), 92–112 (VWEGGMSFHGGLIGVLLAVAW), and 119–139 (MHMFDVVDFCAPLVPVGLGFG). Arg-140 lines the a 1,2-diacyl-sn-glycero-3-phospho-(1'-sn-glycerol) pocket. The next 3 helical transmembrane spans lie at 202–222 (PSQLYEAFLEGLVMFIVLWLF), 230–250 (YAVSGLFALLYGVFRFLVEFV), and 264–284 (LTRGQILSLPLIVIGLFLFWL).

Belongs to the Lgt family.

It localises to the cell inner membrane. It carries out the reaction L-cysteinyl-[prolipoprotein] + a 1,2-diacyl-sn-glycero-3-phospho-(1'-sn-glycerol) = an S-1,2-diacyl-sn-glyceryl-L-cysteinyl-[prolipoprotein] + sn-glycerol 1-phosphate + H(+). Its pathway is protein modification; lipoprotein biosynthesis (diacylglyceryl transfer). Its function is as follows. Catalyzes the transfer of the diacylglyceryl group from phosphatidylglycerol to the sulfhydryl group of the N-terminal cysteine of a prolipoprotein, the first step in the formation of mature lipoproteins. The protein is Phosphatidylglycerol--prolipoprotein diacylglyceryl transferase of Xylella fastidiosa (strain M23).